The following is a 262-amino-acid chain: Nickel import ATP-binding protein NikD (262 aa).

Residues 6-249 (LAIEGLTATT…PGHEVTRMLV (244 aa)) enclose the ABC transporter domain. 42–49 (GASGSGKS) contacts ATP.

It belongs to the ABC transporter superfamily. Nickel importer (TC 3.A.1.5.3) family. As to quaternary structure, the complex is composed of two ATP-binding proteins (NikD and NikE), two transmembrane proteins (NikB and NikC) and a solute-binding protein (NikA).

Its subcellular location is the cell inner membrane. The catalysed reaction is Ni(2+)(out) + ATP + H2O = Ni(2+)(in) + ADP + phosphate + H(+). Part of the ABC transporter complex NikABCDE involved in nickel import. Responsible for energy coupling to the transport system. The polypeptide is Nickel import ATP-binding protein NikD (Brucella abortus biovar 1 (strain 9-941)).